The primary structure comprises 530 residues: Bifunctional purine biosynthesis protein PurH (530 aa).

Residues 1–148 (MNNARPIHRA…KNHKDVAIVV (148 aa)) enclose the MGS-like domain.

This sequence belongs to the PurH family.

The enzyme catalyses (6R)-10-formyltetrahydrofolate + 5-amino-1-(5-phospho-beta-D-ribosyl)imidazole-4-carboxamide = 5-formamido-1-(5-phospho-D-ribosyl)imidazole-4-carboxamide + (6S)-5,6,7,8-tetrahydrofolate. The catalysed reaction is IMP + H2O = 5-formamido-1-(5-phospho-D-ribosyl)imidazole-4-carboxamide. It functions in the pathway purine metabolism; IMP biosynthesis via de novo pathway; 5-formamido-1-(5-phospho-D-ribosyl)imidazole-4-carboxamide from 5-amino-1-(5-phospho-D-ribosyl)imidazole-4-carboxamide (10-formyl THF route): step 1/1. It participates in purine metabolism; IMP biosynthesis via de novo pathway; IMP from 5-formamido-1-(5-phospho-D-ribosyl)imidazole-4-carboxamide: step 1/1. This chain is Bifunctional purine biosynthesis protein PurH, found in Vibrio cholerae serotype O1 (strain M66-2).